A 362-amino-acid chain; its full sequence is Chorismate synthase (362 aa).

Arginine 47 provides a ligand contact to NADP(+). FMN is bound by residues 124-126 (RSS), glycine 286, 301-305 (KPTAT), and arginine 327.

It belongs to the chorismate synthase family. Homotetramer. The cofactor is FMNH2.

The enzyme catalyses 5-O-(1-carboxyvinyl)-3-phosphoshikimate = chorismate + phosphate. It functions in the pathway metabolic intermediate biosynthesis; chorismate biosynthesis; chorismate from D-erythrose 4-phosphate and phosphoenolpyruvate: step 7/7. In terms of biological role, catalyzes the anti-1,4-elimination of the C-3 phosphate and the C-6 proR hydrogen from 5-enolpyruvylshikimate-3-phosphate (EPSP) to yield chorismate, which is the branch point compound that serves as the starting substrate for the three terminal pathways of aromatic amino acid biosynthesis. This reaction introduces a second double bond into the aromatic ring system. This Trichormus variabilis (strain ATCC 29413 / PCC 7937) (Anabaena variabilis) protein is Chorismate synthase.